Reading from the N-terminus, the 454-residue chain is Tryptophanase (454 aa).

Lys-256 bears the N6-(pyridoxal phosphate)lysine mark.

Belongs to the beta-eliminating lyase family. As to quaternary structure, homotetramer. It depends on pyridoxal 5'-phosphate as a cofactor.

The catalysed reaction is L-tryptophan + H2O = indole + pyruvate + NH4(+). The protein operates within amino-acid degradation; L-tryptophan degradation via pyruvate pathway; indole and pyruvate from L-tryptophan: step 1/1. In Rhodobacter capsulatus (Rhodopseudomonas capsulata), this protein is Tryptophanase (tnaA).